The following is a 524-amino-acid chain: Secologanin synthase 1 (524 aa).

Topologically, residues 1–11 (MEMDMDTIRKA) are lumenal. Residues 12-32 (IAATIFALVMAWAWRVLDWAW) traverse the membrane as a helical segment. Over 33-524 (FTPKRIEKRL…SHVIYKKLES (492 aa)) the chain is Cytoplasmic. Residue Cys-470 coordinates heme.

This sequence belongs to the cytochrome P450 family. Heme serves as cofactor. As to expression, upper and lower leaf epidermis.

The protein resides in the endoplasmic reticulum membrane. It carries out the reaction loganin + reduced [NADPH--hemoprotein reductase] + O2 = secologanin + oxidized [NADPH--hemoprotein reductase] + 2 H2O + H(+). It catalyses the reaction secologanin + reduced [NADPH--hemoprotein reductase] + O2 = secoxyloganin + oxidized [NADPH--hemoprotein reductase] + H2O + 2 H(+). Its pathway is alkaloid biosynthesis; secologanin biosynthesis. Component of the seco-iridoid and derivatives monoterpenoid indole alkaloids (MIAs, e.g. secologanin) biosynthesis pathway. Catalyzes the conversion of loganin into secologanin. Catalyzes the conversion of secologanin into secoxyloganin. The sequence is that of Secologanin synthase 1 from Catharanthus roseus (Madagascar periwinkle).